Here is a 103-residue protein sequence, read N- to C-terminus: Leukocyte cysteine proteinase inhibitor 1 (103 aa).

Met1 bears the Blocked amino end (Met); partial mark. The segment at 1 to 20 (MESEEMLAGGLTEPRPATPE) is disordered. Positions 51–55 (QVVAG) match the Secondary area of contact motif.

It belongs to the cystatin family.

Its subcellular location is the cytoplasm. In terms of biological role, potent inhibitor of cathepsins L and S, and papain. This Sus scrofa (Pig) protein is Leukocyte cysteine proteinase inhibitor 1.